A 176-amino-acid chain; its full sequence is Large ribosomal subunit protein uL16 (176 aa).

Belongs to the universal ribosomal protein uL16 family.

This is Large ribosomal subunit protein uL16 from Halobacterium salinarum (strain ATCC 29341 / DSM 671 / R1).